The sequence spans 142 residues: MKGLVRLLTVFSLLLGCWGWLGTTQIAQAGSLQSFLVPQVPVLAIESQNRADAKLATEFGKKIDLNNTNVRAFQQYPGLYPTLARKIIQNAPYSKVEDVLDLPGLSDGQKQLLQSNFDKFTVTELEPAFNEGDDRFNNGIYR.

The first 29 residues, Met-1 to Ala-29, serve as a signal peptide directing secretion.

Belongs to the PsbU family. PSII is composed of 1 copy each of membrane proteins PsbA, PsbB, PsbC, PsbD, PsbE, PsbF, PsbH, PsbI, PsbJ, PsbK, PsbL, PsbM, PsbT, PsbX, PsbY, PsbZ, Psb30/Ycf12, peripheral proteins PsbO, CyanoQ (PsbQ), PsbU, PsbV and a large number of cofactors. It forms dimeric complexes.

It localises to the cellular thylakoid membrane. Its function is as follows. One of the extrinsic, lumenal subunits of photosystem II (PSII). PSII is a light-driven water plastoquinone oxidoreductase, using light energy to abstract electrons from H(2)O, generating a proton gradient subsequently used for ATP formation. The extrinsic proteins stabilize the structure of photosystem II oxygen-evolving complex (OEC), the ion environment of oxygen evolution and protect the OEC against heat-induced inactivation. In Trichormus variabilis (strain ATCC 29413 / PCC 7937) (Anabaena variabilis), this protein is Photosystem II extrinsic protein U.